Here is a 310-residue protein sequence, read N- to C-terminus: Protein-L-isoaspartate O-methyltransferase (310 aa).

A disordered region spans residues 1-41 (MSGERAKRFPLALEDLKRAPRKSEGRPGERQTAGAVPKAAD). The segment covering 14–29 (EDLKRAPRKSEGRPGE) has biased composition (basic and acidic residues). Residue Ser-157 is part of the active site.

It belongs to the methyltransferase superfamily. L-isoaspartyl/D-aspartyl protein methyltransferase family.

It is found in the cytoplasm. The catalysed reaction is [protein]-L-isoaspartate + S-adenosyl-L-methionine = [protein]-L-isoaspartate alpha-methyl ester + S-adenosyl-L-homocysteine. Functionally, catalyzes the methyl esterification of L-isoaspartyl residues in peptides and proteins that result from spontaneous decomposition of normal L-aspartyl and L-asparaginyl residues. It plays a role in the repair and/or degradation of damaged proteins. In Burkholderia cenocepacia (strain HI2424), this protein is Protein-L-isoaspartate O-methyltransferase.